Here is a 175-residue protein sequence, read N- to C-terminus: Protein-export protein SecB (175 aa).

This sequence belongs to the SecB family. In terms of assembly, homotetramer, a dimer of dimers. One homotetramer interacts with 1 SecA dimer.

It is found in the cytoplasm. Its function is as follows. One of the proteins required for the normal export of preproteins out of the cell cytoplasm. It is a molecular chaperone that binds to a subset of precursor proteins, maintaining them in a translocation-competent state. It also specifically binds to its receptor SecA. This chain is Protein-export protein SecB, found in Anaplasma marginale (strain Florida).